A 124-amino-acid chain; its full sequence is Small ribosomal subunit protein uS10z/uS10x (124 aa).

This sequence belongs to the universal ribosomal protein uS10 family.

This is Small ribosomal subunit protein uS10z/uS10x (RPS20A) from Arabidopsis thaliana (Mouse-ear cress).